The primary structure comprises 211 residues: Arginine exporter protein ArgO (211 aa).

A run of 6 helical transmembrane segments spans residues 1-21, 37-57, 68-88, 111-131, 147-167, and 179-199; these read MISYYFQGFALGAAMILPLGP, LMIALLCALSDLVLISAGIFG, LLALVTWGGVAFLLWYGFGAL, IIATMLAVTWLNPHVYLDTFV, WFALGTISASFLWFFGLALLA, and AQRIINILVGVVMWLIAFQLA.

This sequence belongs to the LysE/ArgO transporter (TC 2.A.75) family.

Its subcellular location is the cell inner membrane. The enzyme catalyses L-arginine(in) = L-arginine(out). Its function is as follows. Involved in the export of arginine. Important to control the intracellular level of arginine and the correct balance between arginine and lysine. The sequence is that of Arginine exporter protein ArgO from Salmonella choleraesuis (strain SC-B67).